The sequence spans 201 residues: MEITNAEFVISNTDVKKCPAGTFPEYAFIGRSNVGKSSLINMLTGRKGLAMTSATPGKTMLINHFLINNSWYLVDLPGYGYARRGQKGQEQIRTIIEDYILEREQMTNLFVLIDSRLEPQKIDLEFMEWLGENGIPFAIIFTKADKLKGGRLKINISAYLRELRKQWEELPPYFITSSEERLGRTEVLNYIESINKELNSK.

Residues Thr22–Glu197 form the EngB-type G domain. GTP is bound by residues Gly30–Ser37, Gly57–Leu61, Asp75–Gly78, Thr142–Asp145, and Ile175–Ser178. 2 residues coordinate Mg(2+): Ser37 and Thr59.

This sequence belongs to the TRAFAC class TrmE-Era-EngA-EngB-Septin-like GTPase superfamily. EngB GTPase family. Requires Mg(2+) as cofactor.

Its function is as follows. Necessary for normal cell division and for the maintenance of normal septation. In Bacteroides fragilis (strain YCH46), this protein is Probable GTP-binding protein EngB.